The chain runs to 652 residues: Acetyl-coenzyme A synthetase (652 aa).

CoA-binding positions include 191-194 (RAGR), T311, and N335. Residues 387–389 (GEP), 411–416 (DTWWQT), D500, and R515 each bind ATP. A CoA-binding site is contributed by S523. R526 contributes to the ATP binding site. Mg(2+) contacts are provided by V537, H539, and I542. R584 contributes to the CoA binding site. K609 carries the N6-acetyllysine modification.

It belongs to the ATP-dependent AMP-binding enzyme family. Requires Mg(2+) as cofactor. In terms of processing, acetylated. Deacetylation by the SIR2-homolog deacetylase activates the enzyme.

It catalyses the reaction acetate + ATP + CoA = acetyl-CoA + AMP + diphosphate. Catalyzes the conversion of acetate into acetyl-CoA (AcCoA), an essential intermediate at the junction of anabolic and catabolic pathways. Acs undergoes a two-step reaction. In the first half reaction, Acs combines acetate with ATP to form acetyl-adenylate (AcAMP) intermediate. In the second half reaction, it can then transfer the acetyl group from AcAMP to the sulfhydryl group of CoA, forming the product AcCoA. Its function is as follows. Enables the cell to use acetate during aerobic growth to generate energy via the TCA cycle, and biosynthetic compounds via the glyoxylate shunt. Acetylates CheY, the response regulator involved in flagellar movement and chemotaxis. This Cronobacter sakazakii (strain ATCC BAA-894) (Enterobacter sakazakii) protein is Acetyl-coenzyme A synthetase.